Reading from the N-terminus, the 478-residue chain is ATP synthase subunit beta (478 aa).

Residue 164–171 coordinates ATP; the sequence is GGAGVGKT.

This sequence belongs to the ATPase alpha/beta chains family. As to quaternary structure, F-type ATPases have 2 components, CF(1) - the catalytic core - and CF(0) - the membrane proton channel. CF(1) has five subunits: alpha(3), beta(3), gamma(1), delta(1), epsilon(1). CF(0) has three main subunits: a(1), b(2) and c(9-12). The alpha and beta chains form an alternating ring which encloses part of the gamma chain. CF(1) is attached to CF(0) by a central stalk formed by the gamma and epsilon chains, while a peripheral stalk is formed by the delta and b chains.

The protein resides in the cell membrane. It catalyses the reaction ATP + H2O + 4 H(+)(in) = ADP + phosphate + 5 H(+)(out). In terms of biological role, produces ATP from ADP in the presence of a proton gradient across the membrane. The catalytic sites are hosted primarily by the beta subunits. This chain is ATP synthase subunit beta, found in Streptomyces coelicolor (strain ATCC BAA-471 / A3(2) / M145).